The sequence spans 133 residues: DNA-directed RNA polymerases I and III subunit RPAC2 (133 aa).

Methionine 1 carries the N-acetylmethionine modification.

The protein belongs to the archaeal Rpo11/eukaryotic RPB11/RPC19 RNA polymerase subunit family. In terms of assembly, component of the RNA polymerase I and RNA polymerase III complexes consisting of at least 13 and 17 subunits, respectively. Pol I complex consists of a ten-subunit catalytic core composed of POLR1A/RPA1, POLR1B/RPA2, POLR1C/RPAC1, POLR1D/RPAC2, POLR1H/RPA12, POLR2E/RPABC1, POLR2F/RPABC2, POLR2H/RPABC3, POLR2K/RPABC4 and POLR2L/RPABC5; a mobile stalk subunit POLR1F/RPA43 protruding from the core and additional subunits homologous to general transcription factors POLR1E/RPA49 and POLR1G/RPA34. Part of Pol I pre-initiation complex (PIC), in which Pol I core assembles with RRN3 and promoter-bound UTBF and SL1/TIF-IB complex. Pol III complex consists of a ten-subunit catalytic core composed of POLR3A/RPC1, POLR3B/RPC2, POLR1C/RPAC1, POLR1D/RPAC2, POLR3K/RPC10, POLR2E/RPABC1, POLR2F/RPABC2, POLR2H/RPABC3, POLR2K/RPABC4 and POLR2L/RPABC5; a mobile stalk composed of two subunits POLR3H/RPC8 and CRCP/RPC9, protruding from the core and functioning primarily in transcription initiation; and additional subunits homologous to general transcription factors of the RNA polymerase II machinery, POLR3C/RPC3-POLR3F/RPC6-POLR3G/RPC7 heterotrimer required for transcription initiation and POLR3D/RPC4-POLR3E/RPC5 heterodimer involved in both transcription initiation and termination.

It localises to the nucleus. The protein localises to the nucleolus. In terms of biological role, DNA-dependent RNA polymerase catalyzes the transcription of DNA into RNA using the four ribonucleoside triphosphates as substrates. Common component of RNA polymerases I and III which synthesize ribosomal RNA precursors and short non-coding RNAs including 5S rRNA, snRNAs, tRNAs and miRNAs, respectively. This is DNA-directed RNA polymerases I and III subunit RPAC2 from Homo sapiens (Human).